Here is an 873-residue protein sequence, read N- to C-terminus: Inner centromere protein A (873 aa).

Disordered stretches follow at residues 50–124 (AEPE…KRMT), 237–270 (PANE…VVRK), 282–452 (FSLA…PPPH), 484–535 (KRNT…KVRR), 566–649 (QIDE…LAEQ), 683–736 (LERA…EQAA), and 781–800 (DLNS…PIPA). Residues 60–69 (SQKRRRKKRT) show a composition bias toward basic residues. Low complexity predominate over residues 87–105 (RQSNASWSSSVRRLSVRNQ). Polar residues predominate over residues 239 to 254 (NEQQLNLSNQSATPTG). A compositionally biased stretch (basic residues) spans 261–270 (SVRRSLVVRK). Residues 286-297 (SKRESMTREAVR) show a composition bias toward basic and acidic residues. The span at 314–325 (SSTSSQRSYQSS) shows a compositional bias: low complexity. Positions 437-452 (PSPPCPPSKIVRPPPH) are enriched in pro residues. 4 stretches are compositionally biased toward basic and acidic residues: residues 491–535 (TDPK…KVRR), 566–584 (QIDE…EEKA), 591–649 (KKQE…LAEQ), and 683–733 (LERA…KAKE). Positions 494–707 (KTEEKERQRL…EERKKREQQE (214 aa)) are SAH. Residues 782 to 856 (LNSDDSTDDE…RTSSAVWHSP (75 aa)) are IN box. Ser849 and Ser850 each carry phosphoserine.

This sequence belongs to the INCENP family. In terms of assembly, component of the CPC composed of survivin/birc5, incenp, cdca8/borealin and/or cdca9/dasra-A, and aurkb/aurora-B. Interacts (via C-terminus) with aurkb (via N-terminus and kinase domain). Interacts (via N-terminus) with birc5.1, birc5.2, cdca8 and cdca9. Interacts with mtus1.

Its subcellular location is the nucleus. It is found in the chromosome. The protein localises to the centromere. The protein resides in the cytoplasm. It localises to the cytoskeleton. Its subcellular location is the spindle. It is found in the midbody. The protein localises to the kinetochore. Component of the chromosomal passenger complex (CPC), a complex that acts as a key regulator of mitosis. The CPC complex has essential functions at the centromere in ensuring correct chromosome alignment and segregation and is required for chromatin-induced microtubule stabilization and spindle assembly. Acts as a scaffold regulating CPC localization and activity. The C-terminus associates with aurkb/aurora-B, the N-terminus associated with cdca8/borealin and/or cdca9/dasra-A tethers the CPC to the inner centromere, and the microtubule binding activity within the central SAH domain directs aurkb/aurora-B toward substrates near microtubules. Activates aurkb. In Xenopus laevis (African clawed frog), this protein is Inner centromere protein A (incenp-a).